A 277-amino-acid polypeptide reads, in one-letter code: Shikimate dehydrogenase (NADP(+)) (277 aa).

Residues 15-17 and Thr-62 each bind shikimate; that span reads SLS. The Proton acceptor role is filled by Lys-66. Residues Asn-87 and Asp-102 each contribute to the shikimate site. NADP(+) contacts are provided by residues 127–131, 151–156, and Ile-219; these read GAGGA and NRTVDK. Residue Tyr-221 participates in shikimate binding. Gly-242 contacts NADP(+).

Belongs to the shikimate dehydrogenase family. Homodimer.

The enzyme catalyses shikimate + NADP(+) = 3-dehydroshikimate + NADPH + H(+). It functions in the pathway metabolic intermediate biosynthesis; chorismate biosynthesis; chorismate from D-erythrose 4-phosphate and phosphoenolpyruvate: step 4/7. Its function is as follows. Involved in the biosynthesis of the chorismate, which leads to the biosynthesis of aromatic amino acids. Catalyzes the reversible NADPH linked reduction of 3-dehydroshikimate (DHSA) to yield shikimate (SA). In Bacillus thuringiensis subsp. konkukian (strain 97-27), this protein is Shikimate dehydrogenase (NADP(+)).